We begin with the raw amino-acid sequence, 503 residues long: MAGNMLANYVQVYVMLPLDVVSVDNKFEKGDEIRAQLKKLTEAGVDGVMIDVWWGLVEGKGPKAYDWSAYKQVFDLVHEAGLKLQAIMSFHQCGGNVGDVVNIPIPQWVRDVGATDPDIFYTNRGGTRNIEYLTLGVDDQPLFHGRTAVQMYADYMASFRENMKKFLDAGTIVDIEVGLGPAGEMRYPSYPQSQGWVFPGIGEFICYDKYLEADFKAAAAKAGHPEWELPDDAGEYNDTPEKTQFFKDNGTYLTEKGKFFLSWYSNKLIKHGDKILDEANKVFLGCRVQLAIKISGIHWWYRVPNHAAELTAGYYNLDDRDGYRTIARMLTRHHASMNFTCAEMRDSEQSEEAKSAPEELVQQVLSAGWREGLHVACENALGRYDATAYNTILRNARPKGINKNGPPEHKLFGFTYLRLSNELLEGQNYATFQTFVEKMHANLGHDPSVDPVAPLERSKPEMPIEMILKAAQPKLEPFPFDKNTDLPVKDHTDVGDEVLVAPV.

Substrate is bound by residues aspartate 51, histidine 91, and aspartate 99. Glutamate 184 acts as the Proton donor in catalysis. Positions 293, 298, and 340 each coordinate substrate. Residue glutamate 378 is the Proton acceptor of the active site. Residues 379–380 and arginine 418 each bind substrate; that span reads NA.

Belongs to the glycosyl hydrolase 14 family.

It catalyses the reaction Hydrolysis of (1-&gt;4)-alpha-D-glucosidic linkages in polysaccharides so as to remove successive maltose units from the non-reducing ends of the chains.. The sequence is that of Beta-amylase Tri a 17 (BMY1) from Triticum aestivum (Wheat).